A 309-amino-acid polypeptide reads, in one-letter code: MNQLPHVTVLLGEAVEALVSNPEGTYIDGTFGRGGHSALILQHLASEGRLLAIDKDLAAIATAREKFATDARFAIAHDSFASLKNLAAERGLVGRVQGILLDLGVSSPQLDEAERGFSFMQDGPLDMRMDQTRGPSAAEWVNTASEDEIAWVLREYGEERFAKRMARAIIAERQKRPFVRTGHLAEVIKAANPAWEKGKHPATRAFQAIRIQVNRELEDLEAVLAQAVDVLAPGGRLVVISFHSLEDRLVKRFIRQQEQGDPVPKGLPLREAQLNKTMRSLGKAMKASDQEVEANVRSRSAVMRVAEKL.

S-adenosyl-L-methionine contacts are provided by residues 34–36 (GGH), aspartate 54, phenylalanine 80, aspartate 102, and glutamine 109.

It belongs to the methyltransferase superfamily. RsmH family.

It is found in the cytoplasm. It catalyses the reaction cytidine(1402) in 16S rRNA + S-adenosyl-L-methionine = N(4)-methylcytidine(1402) in 16S rRNA + S-adenosyl-L-homocysteine + H(+). In terms of biological role, specifically methylates the N4 position of cytidine in position 1402 (C1402) of 16S rRNA. This chain is Ribosomal RNA small subunit methyltransferase H, found in Cellvibrio japonicus (strain Ueda107) (Pseudomonas fluorescens subsp. cellulosa).